The primary structure comprises 242 residues: Adenosylcobinamide-GDP ribazoletransferase (242 aa).

A run of 5 helical transmembrane segments spans residues 31 to 51, 52 to 72, 109 to 129, 134 to 154, and 188 to 208; these read LLFY…LSTA, LMGA…VLLS, IAVV…VALI, GAAL…LFLT, and ILIG…CFIG.

The protein belongs to the CobS family. Mg(2+) is required as a cofactor.

It localises to the cell inner membrane. It catalyses the reaction alpha-ribazole + adenosylcob(III)inamide-GDP = adenosylcob(III)alamin + GMP + H(+). It carries out the reaction alpha-ribazole 5'-phosphate + adenosylcob(III)inamide-GDP = adenosylcob(III)alamin 5'-phosphate + GMP + H(+). It participates in cofactor biosynthesis; adenosylcobalamin biosynthesis; adenosylcobalamin from cob(II)yrinate a,c-diamide: step 7/7. Its function is as follows. Joins adenosylcobinamide-GDP and alpha-ribazole to generate adenosylcobalamin (Ado-cobalamin). Also synthesizes adenosylcobalamin 5'-phosphate from adenosylcobinamide-GDP and alpha-ribazole 5'-phosphate. The chain is Adenosylcobinamide-GDP ribazoletransferase from Pseudomonas fluorescens (strain SBW25).